The following is a 68-amino-acid chain: MKTQFVVLLVALVLLQMFAQSEAIWGALLSGVADLLGKRGLKNLDDFDDIFDDDLSSADLEFLKQLMR.

The signal sequence occupies residues 1-23 (MKTQFVVLLVALVLLQMFAQSEA). At Leu-36 the chain carries Leucine amide. Residues 37 to 68 (GKRGLKNLDDFDDIFDDDLSSADLEFLKQLMR) constitute a propeptide that is removed on maturation.

This sequence belongs to the non-disulfide-bridged peptide (NDBP) superfamily. Short antimicrobial peptide (group 4) family. Expressed by the venom gland.

It is found in the secreted. Functionally, probable antimicrobial peptide. Shows low inhibitory activity against herpes simplex virus type 1 (HSV-1). This chain is Antimicrobial peptide Eval655, found in Euscorpiops validus (Scorpion).